Consider the following 366-residue polypeptide: tRNA/tmRNA (uracil-C(5))-methyltransferase (366 aa).

Positions 190, 218, 223, 239, and 299 each coordinate S-adenosyl-L-methionine. Cys-324 acts as the Nucleophile in catalysis. Residue Glu-358 is the Proton acceptor of the active site.

The protein belongs to the class I-like SAM-binding methyltransferase superfamily. RNA M5U methyltransferase family. TrmA subfamily.

The catalysed reaction is uridine(54) in tRNA + S-adenosyl-L-methionine = 5-methyluridine(54) in tRNA + S-adenosyl-L-homocysteine + H(+). It catalyses the reaction uridine(341) in tmRNA + S-adenosyl-L-methionine = 5-methyluridine(341) in tmRNA + S-adenosyl-L-homocysteine + H(+). Functionally, dual-specificity methyltransferase that catalyzes the formation of 5-methyluridine at position 54 (m5U54) in all tRNAs, and that of position 341 (m5U341) in tmRNA (transfer-mRNA). The chain is tRNA/tmRNA (uracil-C(5))-methyltransferase from Cronobacter sakazakii (strain ATCC BAA-894) (Enterobacter sakazakii).